We begin with the raw amino-acid sequence, 257 residues long: Pyridoxine 5'-phosphate synthase (257 aa).

Asn6 is a binding site for 3-amino-2-oxopropyl phosphate. Residue 8–9 (DH) participates in 1-deoxy-D-xylulose 5-phosphate binding. Arg17 lines the 3-amino-2-oxopropyl phosphate pocket. His41 functions as the Proton acceptor in the catalytic mechanism. 1-deoxy-D-xylulose 5-phosphate-binding residues include Arg43 and His48. Glu68 functions as the Proton acceptor in the catalytic mechanism. Position 98 (Thr98) interacts with 1-deoxy-D-xylulose 5-phosphate. The active-site Proton donor is His210. 3-amino-2-oxopropyl phosphate-binding positions include Gly211 and 232–233 (GQ).

This sequence belongs to the PNP synthase family. As to quaternary structure, homooctamer; tetramer of dimers.

Its subcellular location is the cytoplasm. The enzyme catalyses 3-amino-2-oxopropyl phosphate + 1-deoxy-D-xylulose 5-phosphate = pyridoxine 5'-phosphate + phosphate + 2 H2O + H(+). The protein operates within cofactor biosynthesis; pyridoxine 5'-phosphate biosynthesis; pyridoxine 5'-phosphate from D-erythrose 4-phosphate: step 5/5. Functionally, catalyzes the complicated ring closure reaction between the two acyclic compounds 1-deoxy-D-xylulose-5-phosphate (DXP) and 3-amino-2-oxopropyl phosphate (1-amino-acetone-3-phosphate or AAP) to form pyridoxine 5'-phosphate (PNP) and inorganic phosphate. The chain is Pyridoxine 5'-phosphate synthase from Campylobacter jejuni subsp. jejuni serotype O:2 (strain ATCC 700819 / NCTC 11168).